The sequence spans 116 residues: Flagellar transcriptional regulator FlhD (116 aa).

The protein belongs to the FlhD family. As to quaternary structure, homodimer; disulfide-linked. Forms a heterohexamer composed of two FlhC and four FlhD subunits. Each FlhC binds a FlhD dimer, forming a heterotrimer, and a hexamer assembles by dimerization of two heterotrimers.

It localises to the cytoplasm. Functionally, functions in complex with FlhC as a master transcriptional regulator that regulates transcription of several flagellar and non-flagellar operons by binding to their promoter region. Activates expression of class 2 flagellar genes, including fliA, which is a flagellum-specific sigma factor that turns on the class 3 genes. Also regulates genes whose products function in a variety of physiological pathways. This is Flagellar transcriptional regulator FlhD from Serratia proteamaculans (strain 568).